The sequence spans 974 residues: Coiled-coil domain-containing protein 146 (974 aa).

A disordered region spans residues 1-44; that stretch reads MEDRSKYIAEESEDEEDEEQEEKEKKGGASTSTETEEDQEDIPS. The span at 10–21 shows a compositional bias: acidic residues; it reads EESEDEEDEEQE. Ser-12 is subject to Phosphoserine. 6 coiled-coil regions span residues 105–160, 195–340, 421–474, 512–660, 687–712, and 767–848; these read VQLL…QERE, KLLK…TKEN, LPEQ…REVL, KKLE…NESG, QDIEIHILEEKIRFLKLKVAEKQRQI, and LTEE…ELSM.

As to quaternary structure, interacts with CCDC38 and CCDC42. Interacts with intraflagellar transport proteins IFT20 and IFT88.

The protein localises to the cytoplasm. It is found in the cytoskeleton. Its subcellular location is the microtubule organizing center. It localises to the centrosome. The protein resides in the centriole. The protein localises to the cell projection. It is found in the cilium. Its subcellular location is the flagellum. It localises to the flagellum axoneme. The protein resides in the cilium basal body. The protein localises to the midbody. Essential for sperm flagellum biogenesis and male fertility. In Rattus norvegicus (Rat), this protein is Coiled-coil domain-containing protein 146 (Ccdc146).